The chain runs to 108 residues: FK506-binding protein 1 (108 aa).

In terms of domain architecture, PPIase FKBP-type spans 20-108; the sequence is GDSVTIHYVG…KFEVELLKIN (89 aa).

It belongs to the FKBP-type PPIase family. FKBP1 subfamily.

It is found in the cytoplasm. It catalyses the reaction [protein]-peptidylproline (omega=180) = [protein]-peptidylproline (omega=0). With respect to regulation, inhibited by both FK506 and rapamycin. Functionally, PPIases accelerate the folding of proteins. It catalyzes the cis-trans isomerization of proline imidic peptide bonds in oligopeptides. This Cryptococcus neoformans var. neoformans serotype D (strain JEC21 / ATCC MYA-565) (Filobasidiella neoformans) protein is FK506-binding protein 1 (FPR1).